We begin with the raw amino-acid sequence, 418 residues long: Glutamyl-tRNA reductase (418 aa).

Residues 49–52, Ser-109, 114–116, and Gln-120 contribute to the substrate site; these read TCNR and EPQ. The Nucleophile role is filled by Cys-50. NADP(+) is bound at residue 189 to 194; that stretch reads GAGETI.

Belongs to the glutamyl-tRNA reductase family. As to quaternary structure, homodimer.

The enzyme catalyses (S)-4-amino-5-oxopentanoate + tRNA(Glu) + NADP(+) = L-glutamyl-tRNA(Glu) + NADPH + H(+). It functions in the pathway porphyrin-containing compound metabolism; protoporphyrin-IX biosynthesis; 5-aminolevulinate from L-glutamyl-tRNA(Glu): step 1/2. Catalyzes the NADPH-dependent reduction of glutamyl-tRNA(Glu) to glutamate 1-semialdehyde (GSA). This Escherichia coli O1:K1 / APEC protein is Glutamyl-tRNA reductase.